Consider the following 323-residue polypeptide: Porphobilinogen deaminase (323 aa).

S-(dipyrrolylmethanemethyl)cysteine is present on Cys251.

This sequence belongs to the HMBS family. Monomer. The cofactor is dipyrromethane.

It catalyses the reaction 4 porphobilinogen + H2O = hydroxymethylbilane + 4 NH4(+). Its pathway is porphyrin-containing compound metabolism; protoporphyrin-IX biosynthesis; coproporphyrinogen-III from 5-aminolevulinate: step 2/4. The protein operates within porphyrin-containing compound metabolism; chlorophyll biosynthesis. Tetrapolymerization of the monopyrrole PBG into the hydroxymethylbilane pre-uroporphyrinogen in several discrete steps. In Nostoc sp. (strain PCC 7120 / SAG 25.82 / UTEX 2576), this protein is Porphobilinogen deaminase (hemC).